Reading from the N-terminus, the 614-residue chain is Phosphomethylpyrimidine synthase (614 aa).

Residues Asn226, Met255, Tyr284, His320, Ser340–Gly342, Asp381–Arg384, and Glu420 each bind substrate. His424 contributes to the Zn(2+) binding site. Residue Tyr447 coordinates substrate. His488 contacts Zn(2+). [4Fe-4S] cluster is bound by residues Cys568, Cys571, and Cys576.

Belongs to the ThiC family. As to quaternary structure, homodimer. [4Fe-4S] cluster is required as a cofactor.

It catalyses the reaction 5-amino-1-(5-phospho-beta-D-ribosyl)imidazole + S-adenosyl-L-methionine = 4-amino-2-methyl-5-(phosphooxymethyl)pyrimidine + CO + 5'-deoxyadenosine + formate + L-methionine + 3 H(+). Its pathway is cofactor biosynthesis; thiamine diphosphate biosynthesis. Catalyzes the synthesis of the hydroxymethylpyrimidine phosphate (HMP-P) moiety of thiamine from aminoimidazole ribotide (AIR) in a radical S-adenosyl-L-methionine (SAM)-dependent reaction. This is Phosphomethylpyrimidine synthase from Acidovorax ebreus (strain TPSY) (Diaphorobacter sp. (strain TPSY)).